We begin with the raw amino-acid sequence, 339 residues long: GTP 3',8-cyclase (339 aa).

The region spanning 13 to 249 (RYGRPLRDLR…GEVAQRHAFA (237 aa)) is the Radical SAM core domain. Residue R22 coordinates GTP. [4Fe-4S] cluster-binding residues include C29 and C33. Position 35 (Y35) interacts with S-adenosyl-L-methionine. C36 contributes to the [4Fe-4S] cluster binding site. Residue R75 participates in GTP binding. G79 serves as a coordination point for S-adenosyl-L-methionine. T106 contacts GTP. S130 provides a ligand contact to S-adenosyl-L-methionine. K168 serves as a coordination point for GTP. An S-adenosyl-L-methionine-binding site is contributed by M202. [4Fe-4S] cluster contacts are provided by C266 and C269. GTP is bound at residue 271–273 (RAR). C283 lines the [4Fe-4S] cluster pocket.

The protein belongs to the radical SAM superfamily. MoaA family. In terms of assembly, monomer and homodimer. It depends on [4Fe-4S] cluster as a cofactor.

It catalyses the reaction GTP + AH2 + S-adenosyl-L-methionine = (8S)-3',8-cyclo-7,8-dihydroguanosine 5'-triphosphate + 5'-deoxyadenosine + L-methionine + A + H(+). Its pathway is cofactor biosynthesis; molybdopterin biosynthesis. In terms of biological role, catalyzes the cyclization of GTP to (8S)-3',8-cyclo-7,8-dihydroguanosine 5'-triphosphate. The chain is GTP 3',8-cyclase from Xanthomonas campestris pv. campestris (strain B100).